Reading from the N-terminus, the 439-residue chain is Glutamine synthetase (439 aa).

In terms of domain architecture, GS beta-grasp spans 12 to 93 (SKIKFVQLVF…VYGFIYKDNK (82 aa)). The region spanning 99 to 439 (PRGILKRALE…EWELERYFFL (341 aa)) is the GS catalytic domain. Glu-122 and Glu-124 together coordinate Mg(2+). Residue Glu-172 participates in ATP binding. Positions 177 and 184 each coordinate Mg(2+). Gly-229 is a binding site for L-glutamate. Position 233 (His-233) interacts with Mg(2+). Residues 235-237 (HIS) and Ser-237 contribute to the ATP site. Residues Arg-283, Glu-289, and Arg-301 each contribute to the L-glutamate site. Residues Arg-301, Arg-306, and Lys-313 each contribute to the ATP site. Residue Glu-318 coordinates Mg(2+). Arg-320 is an L-glutamate binding site.

The protein belongs to the glutamine synthetase family. In terms of assembly, oligomer of 12 subunits arranged in the form of two hexagons. Mg(2+) serves as cofactor.

The protein localises to the cytoplasm. The enzyme catalyses L-glutamate + NH4(+) + ATP = L-glutamine + ADP + phosphate + H(+). Probably involved in nitrogen metabolism via ammonium assimilation. Catalyzes the ATP-dependent biosynthesis of glutamine from glutamate and ammonia. This Pyrococcus woesei protein is Glutamine synthetase.